Here is a 251-residue protein sequence, read N- to C-terminus: tRNA (guanine-N(7)-)-methyltransferase (251 aa).

S-adenosyl-L-methionine is bound by residues Gly71, Glu94–Leu95, Asn128–Ser129, and Leu148. Asp151 is an active-site residue. Thr226–Glu228 provides a ligand contact to S-adenosyl-L-methionine.

The protein belongs to the class I-like SAM-binding methyltransferase superfamily. TrmB family.

Its subcellular location is the nucleus. It carries out the reaction guanosine(46) in tRNA + S-adenosyl-L-methionine = N(7)-methylguanosine(46) in tRNA + S-adenosyl-L-homocysteine. The protein operates within tRNA modification; N(7)-methylguanine-tRNA biosynthesis. Functionally, catalyzes the formation of N(7)-methylguanine at position 46 (m7G46) in tRNA. This Arabidopsis thaliana (Mouse-ear cress) protein is tRNA (guanine-N(7)-)-methyltransferase.